The chain runs to 324 residues: Olfactory receptor 6K2 (324 aa).

The Extracellular segment spans residues 1 to 25 (MESPNRTTIQEFIFSAFPYSWVKSV). N-linked (GlcNAc...) asparagine glycosylation is present at N5. Residues 26-46 (VCFVPLLFIYAFIVVGNLVII) form a helical membrane-spanning segment. At 47–54 (TVVQLNTH) the chain is on the cytoplasmic side. A helical membrane pass occupies residues 55-75 (LHTPMYTFISALSFLEIWYTT). Over 76-98 (ATIPKMLSSLLSERSISFNGCLL) the chain is Extracellular. Cysteines 96 and 188 form a disulfide. A helical membrane pass occupies residues 99–119 (QMYFFHSTGICEVCLLTVMAF). The Cytoplasmic segment spans residues 120-138 (DHYLAICSPLHYPSIMTPK). Residues 139–159 (LCTQLTLSCCVCGFITPLPEI) form a helical membrane-spanning segment. The Extracellular segment spans residues 160-198 (AWISTLPFCGSNHLEHIFCDFLPVLRLACTDTRAIVMIQ). A helical transmembrane segment spans residues 199–218 (VVDVIHAVEIITAVMLIFMS). Residues 219–238 (YDGIVAVILRIHSAGGRRTA) lie on the Cytoplasmic side of the membrane. The helical transmembrane segment at 239 to 259 (FSTCVSHFIVFSLFFGSVTLM) threads the bilayer. At 260-272 (YLRFSATYSLFWD) the chain is on the extracellular side. Residues 273–293 (IAIALAFAVLSPFFNPIIYSL) form a helical membrane-spanning segment. Over 294 to 324 (RNKEIKEAIKKHIGQAKIFFSVRPGTSSKIF) the chain is Cytoplasmic.

It belongs to the G-protein coupled receptor 1 family.

The protein resides in the cell membrane. Its function is as follows. Odorant receptor. This chain is Olfactory receptor 6K2 (OR6K2), found in Homo sapiens (Human).